Consider the following 335-residue polypeptide: Pyridoxal 5'-phosphate synthase subunit PdxS (335 aa).

D30 serves as a coordination point for D-ribose 5-phosphate. The Schiff-base intermediate with D-ribose 5-phosphate role is filled by K87. G159 lines the D-ribose 5-phosphate pocket. A D-glyceraldehyde 3-phosphate-binding site is contributed by R171. Residues G257 and 278–279 contribute to the D-ribose 5-phosphate site; that span reads GS.

It belongs to the PdxS/SNZ family. In terms of assembly, in the presence of PdxT, forms a dodecamer of heterodimers.

The catalysed reaction is aldehydo-D-ribose 5-phosphate + D-glyceraldehyde 3-phosphate + L-glutamine = pyridoxal 5'-phosphate + L-glutamate + phosphate + 3 H2O + H(+). Its pathway is cofactor biosynthesis; pyridoxal 5'-phosphate biosynthesis. Its function is as follows. Catalyzes the formation of pyridoxal 5'-phosphate from ribose 5-phosphate (RBP), glyceraldehyde 3-phosphate (G3P) and ammonia. The ammonia is provided by the PdxT subunit. Can also use ribulose 5-phosphate and dihydroxyacetone phosphate as substrates, resulting from enzyme-catalyzed isomerization of RBP and G3P, respectively. The polypeptide is Pyridoxal 5'-phosphate synthase subunit PdxS (Thermococcus onnurineus (strain NA1)).